The primary structure comprises 277 residues: Adenylate kinase (277 aa).

An ATP-binding site is contributed by 53–58 (GAGKGT). The tract at residues 73–102 (ATGDMLRAQVAAKTPLGREAKKIMDAGGLV) is NMP. AMP-binding positions include threonine 74, arginine 79, 100 to 102 (GLV), 129 to 132 (GFPR), and glutamine 136. The LID stretch occupies residues 170 to 207 (GRLVHPASGRSYHKIFNPPKAPMTDDATGEPLIQRSDD). Residues arginine 171 and 180 to 181 (SY) contribute to the ATP site. AMP-binding residues include arginine 204 and arginine 215. Glutamine 243 provides a ligand contact to ATP.

This sequence belongs to the adenylate kinase family. AK2 subfamily. In terms of assembly, monomer.

The protein localises to the cytoplasm. It is found in the cytosol. Its subcellular location is the mitochondrion intermembrane space. It catalyses the reaction AMP + ATP = 2 ADP. In terms of biological role, catalyzes the reversible transfer of the terminal phosphate group between ATP and AMP. Plays an important role in cellular energy homeostasis and in adenine nucleotide metabolism. Adenylate kinase activity is critical for regulation of the phosphate utilization and the AMP de novo biosynthesis pathways. This is Adenylate kinase from Phaeosphaeria nodorum (strain SN15 / ATCC MYA-4574 / FGSC 10173) (Glume blotch fungus).